The sequence spans 433 residues: Gamma-glutamyl phosphate reductase (433 aa).

The protein belongs to the gamma-glutamyl phosphate reductase family.

The protein resides in the cytoplasm. It carries out the reaction L-glutamate 5-semialdehyde + phosphate + NADP(+) = L-glutamyl 5-phosphate + NADPH + H(+). Its pathway is amino-acid biosynthesis; L-proline biosynthesis; L-glutamate 5-semialdehyde from L-glutamate: step 2/2. Functionally, catalyzes the NADPH-dependent reduction of L-glutamate 5-phosphate into L-glutamate 5-semialdehyde and phosphate. The product spontaneously undergoes cyclization to form 1-pyrroline-5-carboxylate. This Cyanothece sp. (strain PCC 7425 / ATCC 29141) protein is Gamma-glutamyl phosphate reductase.